The primary structure comprises 268 residues: Hydroxyacylglutathione hydrolase (268 aa).

The Zn(2+) site is built by H56, H58, D60, H61, H113, D130, and H168.

The protein belongs to the metallo-beta-lactamase superfamily. Glyoxalase II family. As to quaternary structure, monomer. Requires Zn(2+) as cofactor.

It carries out the reaction an S-(2-hydroxyacyl)glutathione + H2O = a 2-hydroxy carboxylate + glutathione + H(+). It functions in the pathway secondary metabolite metabolism; methylglyoxal degradation; (R)-lactate from methylglyoxal: step 2/2. Thiolesterase that catalyzes the hydrolysis of S-D-lactoyl-glutathione to form glutathione and D-lactic acid. In Hydrogenovibrio crunogenus (strain DSM 25203 / XCL-2) (Thiomicrospira crunogena), this protein is Hydroxyacylglutathione hydrolase.